The chain runs to 318 residues: NADH-ubiquinone oxidoreductase chain 1 (318 aa).

A run of 8 helical transmembrane segments spans residues 2-22, 70-90, 100-120, 147-167, 172-192, 222-242, 253-273, and 294-314; these read FMINILMLIIPILLAVAFLTL, MFILAPIMALGLALTMWIPLP, LGVLFMLAMSSLAVYSILWSG, AIILLSVLLMSGSFTLSTLII, MWLILPAWPLAMMWFISTLAE, LFFMAEYANIIMMNIFTAILF, ELYTINFTIKSLLLTMSFLWI, and LPLTLALCMWHVSLPILTSGI.

Belongs to the complex I subunit 1 family. As to quaternary structure, core subunit of respiratory chain NADH dehydrogenase (Complex I) which is composed of 45 different subunits.

The protein resides in the mitochondrion inner membrane. The enzyme catalyses a ubiquinone + NADH + 5 H(+)(in) = a ubiquinol + NAD(+) + 4 H(+)(out). Its function is as follows. Core subunit of the mitochondrial membrane respiratory chain NADH dehydrogenase (Complex I) which catalyzes electron transfer from NADH through the respiratory chain, using ubiquinone as an electron acceptor. Essential for the catalytic activity and assembly of complex I. The polypeptide is NADH-ubiquinone oxidoreductase chain 1 (MT-ND1) (Bos indicus (Zebu)).